Reading from the N-terminus, the 305-residue chain is Probable lipid kinase YegS-like (305 aa).

The 129-residue stretch at 1–129 folds into the DAGKc domain; the sequence is MSERKALLIL…IDLGEVGGQI (129 aa). Residues T39, 65–71, and T92 contribute to the ATP site; that span reads GDGTLRD. Positions 210, 213, and 215 each coordinate Mg(2+). Residue E268 is the Proton acceptor of the active site.

It belongs to the diacylglycerol/lipid kinase family. YegS lipid kinase subfamily. Requires Mg(2+) as cofactor. The cofactor is Ca(2+).

It localises to the cytoplasm. Probably phosphorylates lipids; the in vivo substrate is unknown. The polypeptide is Probable lipid kinase YegS-like (Pseudomonas fluorescens (strain Pf0-1)).